A 247-amino-acid chain; its full sequence is ATP synthase subunit a (247 aa).

The next 6 membrane-spanning stretches (helical) occupy residues 24–44 (IAFTNSSAYMFLAVALTSLLM), 82–102 (FFPFVFSIFMLVTVSNLVGII), 112–132 (IIVTAALAFLVFFTVLIYGFY), 141–161 (LFVPSGIPVVILPLVVTIEVI), 194–214 (MLGAMGIVGVFGAVLPLALVV), and 219–239 (LELLVAFLQAYVFTILTCIYI).

This sequence belongs to the ATPase A chain family. F-type ATPases have 2 components, CF(1) - the catalytic core - and CF(0) - the membrane proton channel. CF(1) has five subunits: alpha(3), beta(3), gamma(1), delta(1), epsilon(1). CF(0) has three main subunits: a(1), b(2) and c(9-12). The alpha and beta chains form an alternating ring which encloses part of the gamma chain. CF(1) is attached to CF(0) by a central stalk formed by the gamma and epsilon chains, while a peripheral stalk is formed by the delta and b chains.

It localises to the cell inner membrane. Key component of the proton channel; it plays a direct role in the translocation of protons across the membrane. This chain is ATP synthase subunit a, found in Nitrobacter winogradskyi (strain ATCC 25391 / DSM 10237 / CIP 104748 / NCIMB 11846 / Nb-255).